Here is a 511-residue protein sequence, read N- to C-terminus: Cytochrome P450 714C3 (511 aa).

The Lumenal portion of the chain corresponds to 1 to 6 (MEKLLA). The chain crosses the membrane as a helical; Signal-anchor for type III membrane protein span at residues 7 to 27 (LIVVLVILLSLALFYLCNILW). Topologically, residues 28–511 (LRAVKIRKKL…GLPLMVTKLP (484 aa)) are cytoplasmic. Residue cysteine 458 participates in heme binding.

Belongs to the cytochrome P450 family. Heme is required as a cofactor.

It localises to the membrane. This is Cytochrome P450 714C3 (CYP714C3) from Oryza sativa subsp. japonica (Rice).